Consider the following 318-residue polypeptide: GTP cyclohydrolase MptA (318 aa).

This sequence belongs to the GTP cyclohydrolase IV family. In terms of assembly, homodimer. Fe(2+) is required as a cofactor.

The catalysed reaction is GTP + H2O = 7,8-dihydroneopterin 2',3'-cyclic phosphate + formate + diphosphate + H(+). Its pathway is cofactor biosynthesis; 5,6,7,8-tetrahydromethanopterin biosynthesis. Converts GTP to 7,8-dihydro-D-neopterin 2',3'-cyclic phosphate, the first intermediate in the biosynthesis of coenzyme methanopterin. The polypeptide is GTP cyclohydrolase MptA (Methanosarcina acetivorans (strain ATCC 35395 / DSM 2834 / JCM 12185 / C2A)).